The following is a 149-amino-acid chain: Ribonuclease H (149 aa).

Positions 1–143 (MNAVEIYTDG…ADMLANRGVE (143 aa)) constitute an RNase H type-1 domain. Asp9, Glu47, Asp69, and Asp135 together coordinate Mg(2+).

It belongs to the RNase H family. As to quaternary structure, monomer. Requires Mg(2+) as cofactor.

It is found in the cytoplasm. It carries out the reaction Endonucleolytic cleavage to 5'-phosphomonoester.. In terms of biological role, endonuclease that specifically degrades the RNA of RNA-DNA hybrids. The polypeptide is Ribonuclease H (Albidiferax ferrireducens (strain ATCC BAA-621 / DSM 15236 / T118) (Rhodoferax ferrireducens)).